The following is a 659-amino-acid chain: Cytochrome bo(3) ubiquinol oxidase subunit 1 (659 aa).

Residues 1–14 lie on the Extracellular side of the membrane; the sequence is MFGKLTLKAIPVDE. The chain crosses the membrane as a helical span at residues 15-35; that stretch reads PIIMVTYISIILIALFISFSI. At 36–58 the chain is on the cytoplasmic side; it reads TYFKKWKYLWYEWFTTVDHKKIS. The helical transmembrane segment at 59-79 threads the bilayer; sequence IMYGILAFIMLFRGFVDAILM. The a ubiquinone site is built by Arg-71, Asp-75, and His-98. At 80-106 the chain is on the extracellular side; the sequence is RTQQVIASSGNTGFLPPHHYDQIFTAH. Position 106 (His-106) interacts with heme b. A helical transmembrane segment spans residues 107–127; it reads GVIMIFFVAMPLVIGLMNLVV. At 128-145 the chain is on the cytoplasmic side; it reads PLQIGARDVAFPFLNNLS. The chain crosses the membrane as a helical span at residues 146-166; it reads FWLNVSGAILLTLSLGIGEFA. The Extracellular portion of the chain corresponds to 167–189; the sequence is QTGWLAYPPLSEVKYSPGVGVDY. Trp-170 contacts heme b. Residues 190–210 traverse the membrane as a helical segment; it reads WIWSLQISGVGTTLTGINFLI. Residues 211 to 225 are Cytoplasmic-facing; sequence TILKMRAPGMCFFKM. A helical transmembrane segment spans residues 226–246; it reads PVFTWAALCTNILIVISFPVL. Residues 247–277 lie on the Extracellular side of the membrane; the sequence is TTTLLLLTLDRCFDFHFFTNNFGGNPMMYVN. The chain crosses the membrane as a helical span at residues 278–298; the sequence is LIWIWGHPEVYILVLPVFGVF. Cu(2+) is bound at residue His-284. The 1'-histidyl-3'-tyrosine (His-Tyr) cross-link spans 284 to 288; it reads HPEVY. Tyr-288 contacts Fe(II)-heme o. Residues 299 to 309 lie on the Cytoplasmic side of the membrane; that stretch reads SEVVATFSKKR. A helical transmembrane segment spans residues 310–330; the sequence is LFGYVSLVWATLAITILSFIV. The Extracellular segment spans residues 331–347; that stretch reads WLHHFFTMGAGSNVNAF. Cu(2+) is bound by residues His-333 and His-334. The chain crosses the membrane as a helical span at residues 348 to 368; the sequence is FGITTMIIAIPTGVKIFNWLF. The Cytoplasmic segment spans residues 369 to 380; sequence TMYQGRVHMHSS. The chain crosses the membrane as a helical span at residues 381-401; sequence MLWTIGFLITFSIGGMTGVLL. Topologically, residues 402 to 413 are extracellular; sequence SIPPADFILHNS. The Fe(II)-heme o site is built by His-411 and His-419. Residues 414–434 form a helical membrane-spanning segment; sequence LFLVAHFHNVIIGGVVFGCFA. His-421 serves as a coordination point for heme b. Over 435-456 the chain is Cytoplasmic; sequence GINYWFPKLFGFILNELWGKRA. A helical transmembrane segment spans residues 457–477; it reads FWFWIIGFFTAFMPLYFLGFM. Topologically, residues 478–490 are extracellular; it reads GMTRRLSQNIDIE. Positions 481 and 482 each coordinate heme b. A helical transmembrane segment spans residues 491–511; that stretch reads FHFLLSIAAIGAILIGIGILC. Topologically, residues 512-580 are cytoplasmic; sequence QIIQFWVSVR…KNQVQKKQYS (69 aa). The chain crosses the membrane as a helical span at residues 581–601; sequence AIHMPKNTGLGIFISFFSLLF. Topologically, residues 602-605 are extracellular; it reads GFSA. A helical membrane pass occupies residues 606–626; that stretch reads VWNIIWLSFLSFLVVIISLIF. Topologically, residues 627–659 are cytoplasmic; sequence KSIDENTEYTVSVKEIESIENRHLENVQKAGLK.

It belongs to the heme-copper respiratory oxidase family. The cytochrome bo(3) ubiquinol oxidase complex is a heterooctamer of two A chains, two B chains, two C chains and two D chains. The cofactor is Cu(2+). Heme b is required as a cofactor. Fe(II)-heme o serves as cofactor.

Its subcellular location is the cell membrane. The catalysed reaction is 2 a ubiquinol + O2 + n H(+)(in) = 2 a ubiquinone + 2 H2O + n H(+)(out). In terms of biological role, cytochrome bo(3) ubiquinol oxidase is the terminal enzyme in the aerobic respiratory chain. Catalyzes the four-electron reduction of O2 to water, using a ubiquinol as a membrane soluble electron donor for molecular oxygen reduction. Has proton pump activity across the membrane in addition to electron transfer, pumping 2 protons/electron and generating a proton motive force. All the redox centers of this enzyme complex are located within the largest subunit, subunit I. Protons are probably pumped via D- and K- channels found in this subunit. This is Cytochrome bo(3) ubiquinol oxidase subunit 1 (cyoB) from Buchnera aphidicola subsp. Schizaphis graminum (strain Sg).